Consider the following 207-residue polypeptide: Thiamine-phosphate synthase (207 aa).

4-amino-2-methyl-5-(diphosphooxymethyl)pyrimidine contacts are provided by residues 36–40 and Asn68; that span reads QLRLK. The Mg(2+) site is built by Asp69 and Asp88. Thr107 serves as a coordination point for 4-amino-2-methyl-5-(diphosphooxymethyl)pyrimidine. 2-[(2R,5Z)-2-carboxy-4-methylthiazol-5(2H)-ylidene]ethyl phosphate is bound at residue 134-136; that stretch reads TGT. Lys137 serves as a coordination point for 4-amino-2-methyl-5-(diphosphooxymethyl)pyrimidine. Gly164 provides a ligand contact to 2-[(2R,5Z)-2-carboxy-4-methylthiazol-5(2H)-ylidene]ethyl phosphate.

The protein belongs to the thiamine-phosphate synthase family. The cofactor is Mg(2+).

The catalysed reaction is 2-[(2R,5Z)-2-carboxy-4-methylthiazol-5(2H)-ylidene]ethyl phosphate + 4-amino-2-methyl-5-(diphosphooxymethyl)pyrimidine + 2 H(+) = thiamine phosphate + CO2 + diphosphate. The enzyme catalyses 2-(2-carboxy-4-methylthiazol-5-yl)ethyl phosphate + 4-amino-2-methyl-5-(diphosphooxymethyl)pyrimidine + 2 H(+) = thiamine phosphate + CO2 + diphosphate. It carries out the reaction 4-methyl-5-(2-phosphooxyethyl)-thiazole + 4-amino-2-methyl-5-(diphosphooxymethyl)pyrimidine + H(+) = thiamine phosphate + diphosphate. Its pathway is cofactor biosynthesis; thiamine diphosphate biosynthesis; thiamine phosphate from 4-amino-2-methyl-5-diphosphomethylpyrimidine and 4-methyl-5-(2-phosphoethyl)-thiazole: step 1/1. Functionally, condenses 4-methyl-5-(beta-hydroxyethyl)thiazole monophosphate (THZ-P) and 2-methyl-4-amino-5-hydroxymethyl pyrimidine pyrophosphate (HMP-PP) to form thiamine monophosphate (TMP). The sequence is that of Thiamine-phosphate synthase from Rhodospirillum centenum (strain ATCC 51521 / SW).